A 275-amino-acid chain; its full sequence is Putative acyl-[acyl-carrier-protein] desaturase DesA2 (275 aa).

Residues glutamate 107, histidine 110, glutamate 159, glutamate 189, and histidine 192 each contribute to the Fe cation site.

Belongs to the fatty acid desaturase type 2 family. In terms of assembly, homodimer. It depends on Fe(2+) as a cofactor.

It participates in lipid metabolism; fatty acid metabolism. May be a desaturase involved in mycobacterial fatty acid biosynthesis. The chain is Putative acyl-[acyl-carrier-protein] desaturase DesA2 (desA2) from Mycobacterium tuberculosis (strain CDC 1551 / Oshkosh).